Reading from the N-terminus, the 253-residue chain is Ubiquinone biosynthesis O-methyltransferase (253 aa).

The S-adenosyl-L-methionine site is built by arginine 47, glycine 78, aspartate 99, and methionine 141.

The protein belongs to the methyltransferase superfamily. UbiG/COQ3 family.

The catalysed reaction is a 3-demethylubiquinol + S-adenosyl-L-methionine = a ubiquinol + S-adenosyl-L-homocysteine + H(+). It catalyses the reaction a 3-(all-trans-polyprenyl)benzene-1,2-diol + S-adenosyl-L-methionine = a 2-methoxy-6-(all-trans-polyprenyl)phenol + S-adenosyl-L-homocysteine + H(+). The protein operates within cofactor biosynthesis; ubiquinone biosynthesis. Its function is as follows. O-methyltransferase that catalyzes the 2 O-methylation steps in the ubiquinone biosynthetic pathway. This is Ubiquinone biosynthesis O-methyltransferase from Bradyrhizobium diazoefficiens (strain JCM 10833 / BCRC 13528 / IAM 13628 / NBRC 14792 / USDA 110).